The sequence spans 286 residues: MTNQTIQEALGHGQGNDLGNSDGHRIEYVETIEAYNKWAEVYDTDGNFLQALDTFEMKDLLPRFLCLVQTQTNGKSNMTPGEQVLKLVDLGCGTGRNTLQLAKSAPKEAQIIGLDASPGMLEVAEGNLKAQGVMGTVDERRVVLGVYDLLSPRPESLPVSLRGEARASGAISTLVLEHIPLDKFFEGAARLIRPGGYLLVTNMHAEMGAISQAGFVDVTSGKKIRPTSYAHEVGNVIAAAERAGFEIVPLNGAEKVRERRVNEEMVALLGSRARKWVNVVVWFGLS.

Belongs to the methyltransferase superfamily.

Functionally, involved in osmoadaptation. This is an uncharacterized protein from Emericella nidulans (strain FGSC A4 / ATCC 38163 / CBS 112.46 / NRRL 194 / M139) (Aspergillus nidulans).